The following is a 216-amino-acid chain: Large ribosomal subunit protein uL1 (216 aa).

The protein belongs to the universal ribosomal protein uL1 family.

The polypeptide is Large ribosomal subunit protein uL1 (Oryza sativa subsp. indica (Rice)).